The following is a 682-amino-acid chain: Inactive protein-arginine deiminase type-6 (682 aa).

Residues Ser2 and Ser434 each carry the phosphoserine modification.

It belongs to the protein arginine deiminase family. In terms of assembly, homodimers. Associates with alpha-tubulin. Post-translationally, phosphorylation at Ser-2, possibly by RSK-type kinases, and Ser-434 creates binding sites for 14-3-3 proteins. As to expression, expressed at very high levels in oocytes. Weakly expressed in testis. Expressed in primordial, primary, secondary and Graafian follicles, and in immature oocytes, mature eggs and blastocyst (at protein level).

It is found in the cytoplasm. It localises to the nucleus. The protein localises to the cytoplasmic vesicle. The protein resides in the secretory vesicle. Its subcellular location is the cortical granule. Structural constituent of cytoplasmic lattices, which plays a key role in early embryonic development. Cytoplasmic lattices consist in fibrous structures found in the cytoplasm of oocytes and preimplantation embryos. They are required to store maternal proteins critical for embryonic development, such as ribosomal proteins and proteins that control epigenetic reprogramming of the preimplantation embryo, and prevent their degradation or activation. In contrast to other members of the family, does not show protein-arginine deiminase activity due to its inability to bind Ca(2+). This Mus musculus (Mouse) protein is Inactive protein-arginine deiminase type-6.